Here is a 399-residue protein sequence, read N- to C-terminus: Small ribosomal subunit protein uS3m (399 aa).

Belongs to the universal ribosomal protein uS3 family.

Its subcellular location is the mitochondrion. In terms of biological role, essential for mitochondrial protein synthesis and required for the maturation of small ribosomal subunits. This Penicillium urticae protein is Small ribosomal subunit protein uS3m.